The following is a 1187-amino-acid chain: Intraflagellar transport protein 122 homolog (1187 aa).

WD repeat units follow at residues 16–54 (KVEQ…LIQP), 57–97 (GHKD…LKYT), 99–135 (NDSI…VSKH), 137–175 (VSSK…KVKI), 180–223 (GSSS…IGKD), 225–264 (SLTF…LGSI), 266–306 (EQNA…HGLY), and 459–498 (KQNT…LLFQ). The tract at residues 1070-1094 (KSWQEMSSGESQCLKLEDGPDDPED) is disordered.

Component of the IFT complex A (IFT-A) complex.

The protein resides in the cell projection. It localises to the cilium. The protein localises to the cytoplasm. Its subcellular location is the cytoskeleton. It is found in the cilium basal body. Required for cilia formation during embryonal development. Acts as a negative regulator of Shh signaling. The chain is Intraflagellar transport protein 122 homolog (ift122) from Danio rerio (Zebrafish).